A 524-amino-acid polypeptide reads, in one-letter code: Probable 1,3-beta-glucanosyltransferase GAS3 (524 aa).

A signal peptide spans 1–21; that stretch reads MQLSKSILLAALAATPSLVNA. C78 and C107 form a disulfide bridge. (1,3-beta-D-glucosyl)n contacts are provided by Y96, N168, and E169. Residue E169 is the Proton donor of the active site. The N-linked (GlcNAc...) asparagine glycan is linked to N201. D212 and R217 together coordinate (1,3-beta-D-glucosyl)n. Intrachain disulfides connect C226-C369 and C254-C286. The N-linked (GlcNAc...) asparagine glycan is linked to N269. The Nucleophile role is filled by E283. Y315 is a (1,3-beta-D-glucosyl)n binding site. N350, N385, N404, and N422 each carry an N-linked (GlcNAc...) asparagine glycan. The interval 461–498 is disordered; that stretch reads TSQSSSRSLTSSTSPSSSTGSSSSTGSSSASSSSKSKG. G498 is lipidated: GPI-anchor amidated glycine. A propeptide spans 499 to 524 (removed in mature form); that stretch reads VGNIVNVSFSQSGYLALFAGLISALL.

The protein belongs to the glycosyl hydrolase 72 family. Post-translationally, the GPI-anchor is attached to the protein in the endoplasmic reticulum and serves to target the protein to the cell surface. There, the glucosamine-inositol phospholipid moiety is cleaved off and the GPI-modified mannoprotein is covalently attached via its lipidless GPI glycan remnant to the 1,6-beta-glucan of the outer cell wall layer. N-glycosylated.

It localises to the secreted. The protein localises to the cell wall. The protein resides in the membrane. Its function is as follows. Splits internally a 1,3-beta-glucan molecule and transfers the newly generated reducing end (the donor) to the non-reducing end of another 1,3-beta-glucan molecule (the acceptor) forming a 1,3-beta linkage, resulting in the elongation of 1,3-beta-glucan chains in the cell wall. Involved in cell wall biosynthesis and morphogenesis. This is Probable 1,3-beta-glucanosyltransferase GAS3 (GAS3) from Saccharomyces cerevisiae (strain ATCC 204508 / S288c) (Baker's yeast).